The chain runs to 343 residues: DNA-directed RNA polymerase subunit alpha (343 aa).

Positions 1–239 (MGETVTIQKN…DQLNVFVNFE (239 aa)) are alpha N-terminal domain (alpha-NTD). Residues 255 to 343 (FNPAFLKKVD…ELAKRFEDHY (89 aa)) form an alpha C-terminal domain (alpha-CTD) region.

The protein belongs to the RNA polymerase alpha chain family. As to quaternary structure, homodimer. The RNAP catalytic core consists of 2 alpha, 1 beta, 1 beta' and 1 omega subunit. When a sigma factor is associated with the core the holoenzyme is formed, which can initiate transcription.

It catalyses the reaction RNA(n) + a ribonucleoside 5'-triphosphate = RNA(n+1) + diphosphate. Functionally, DNA-dependent RNA polymerase catalyzes the transcription of DNA into RNA using the four ribonucleoside triphosphates as substrates. In Bradyrhizobium diazoefficiens (strain JCM 10833 / BCRC 13528 / IAM 13628 / NBRC 14792 / USDA 110), this protein is DNA-directed RNA polymerase subunit alpha.